The sequence spans 1449 residues: MGARASVLTGGKLDQWEAIYLRPGGKKKYRLKHLVWASRELERFACNPGLMDTANGCAQLINQLEPALKTGSEGLRSLXNTLAVLYCVHSNIPVHNTQEALDKIKEKQEQHKSEPKKPEAGTAAAADSSISRNYPLVQNAQGQMVHQPLTPRTLNAWVKVIEEKAFNPEIIPMFMALSEGATPSDLNSMLNTVGGHQAAMQMLKEVINEEAAEWDRTHPAPVGPLPPGQMRDPRGSDIAGTTSTLAEQVAWMTSNPPIPVGDIYRRWIVLGLNRIVRMYSPVSILEIKQGPKEPFRDYVDRFYKTLRAEQATQDVKNWMTETLLVQNANPDCKQILKALGPGATLEEMMTACQGVGGPAHKARVLAEAMAQAQTATSVFVQRGNFKGIRKTIKCFNCGKEGHLARNCKAPRRRGCWKCGQEGHQMKDCKNEGXQANFRKGLVSLQRETRKLPPDNNKERAHSPATRELWVSGGEEHTGKGDAGEPGEDRDLSVPTLNFPQITLWQRPVXAVKIGKEIREALLDTGADDTVIEEIQLEGKWKPKMIGGIGGFIKVRQYDNITIDIQGRKAVGTVLVGPTPVNIIGRNFLTQIGCTLNFPISPIETVPVKLKPGMDGPRVKQWPLTAEKIEALREICTEMEKEGKISRIGPENPYNTPIFAIKKKDSTKWRKLVDFRELNKRTQEFWEVQLGIPHPAGLKQKKSVTVXDVGDAYFSCPLDKDFRKYTAFTIPSINNETPGIRYQYNVLPQGWKGSPAIFQSSMTKILEPFRKKHPEIIIYQYMDDLYVGSDLEIAQHRETVEELRGHLLKWGFTTPDKKHQKEPPFLWMGYELHPDKWTVQPIKLPEKEVWTVNDIQKLVGKLNWASQIYPGIKVKQLCKLIRGTKALTEVVTFTQEAELELAENREILKEPLHGVYYDPGKELIAEIQKQGQGQWTYQIYQEPYKNLKTGKYAKXRSAHTNDIKELAAVVQKVATESIVIWGKTPKFKLPVQKEVWETWWTEHWQATWIPEWEFVNTPPLVKLWYQLETEPISGAETYYVDGAANKETKLGKAGFVTDRGRQKVVSIENTTNQKAELQAILLALQESGQEANIVTDSQYAMGIIHSQPDKSESDLVGQIIEELIKKERVYLSWVPAHKGIGGNEQVDXLVSSGIRXVLFLDGIEKAQEEHERYHSNWKAMASDFNLPPIVAKEIVASCDKCQLKGEAMHGQINCSPGVWQLDCTHLEGKIILVAVHVASGYLEAEVIPAETGQETAYFILKLAGRWPVKVIHTDNGPNFISATVKAACWWAGIKQEFGIPYNPQSQGAVESMNKELKKIIGQIRDQAEHLKTAVQMAVFIHNFKRKGGIGGXTAGERIIDIIATDIQTTKLQTQILKVQNFXVYYRDSRDPIWKGPAKLLWKGEGAVVIQDNGDIKVVPRRKAKIIRDYGKQMAGDGCVASGQDENQDME.

Glycine 2 carries N-myristoyl glycine; by host lipidation. The tract at residues valine 7–leucine 31 is interaction with Gp41. The tract at residues leucine 8–arginine 43 is interaction with host CALM1. The segment at lysine 12–isoleucine 19 is interaction with host AP3D1. An interaction with membrane phosphatidylinositol 4,5-bisphosphate and RNA region spans residues aspartate 14–histidine 33. The Nuclear export signal signature appears at tryptophan 16 to arginine 22. A Nuclear localization signal motif is present at residues lysine 26 to lysine 32. Positions glutamate 73–serine 77 are interaction with membrane phosphatidylinositol 4,5-bisphosphate. Positions lysine 105–glutamate 119 are enriched in basic and acidic residues. The disordered stretch occupies residues lysine 105–serine 128. Tyrosine 134 carries the phosphotyrosine; by host modification. Residues asparagine 191–glutamine 229 are interaction with human PPIA/CYPA and NUP153. The segment at tyrosine 279–leucine 365 is dimerization/Multimerization of capsid protein p24. 2 consecutive CCHC-type zinc fingers follow at residues isoleucine 392–alanine 409 and arginine 413–asparagine 430. The disordered stretch occupies residues glutamine 445–serine 492. 2 stretches are compositionally biased toward basic and acidic residues: residues arginine 446–histidine 461 and glycine 473–leucine 491. Positions proline 499–leucine 503 are dimerization of protease. The region spanning arginine 518–phenylalanine 587 is the Peptidase A2 domain. The For protease activity; shared with dimeric partner role is filled by aspartate 523. 2 dimerization of protease regions span residues glycine 547–lysine 553 and asparagine 586–proline 598. Positions glutamate 641–leucine 831 constitute a Reverse transcriptase domain. Mg(2+) is bound by residues aspartate 707, aspartate 782, and aspartate 783. The tract at residues phenylalanine 824–histidine 832 is RT 'primer grip'. The Tryptophan repeat motif motif lies at tryptophan 995 to tryptophan 1011. Residues isoleucine 1031–arginine 1154 enclose the RNase H type-1 domain. Residues aspartate 1040, glutamate 1075, aspartate 1095, and aspartate 1146 each contribute to the Mg(2+) site. Residues aspartate 1160 to glutamine 1201 form an Integrase-type zinc finger. Residues histidine 1169, histidine 1173, cysteine 1197, and cysteine 1200 each coordinate Zn(2+). Residues isoleucine 1211 to isoleucine 1361 enclose the Integrase catalytic domain. The Mg(2+) site is built by aspartate 1221, aspartate 1273, and glutamate 1309. A DNA-binding region (integrase-type) is located at residues phenylalanine 1380–aspartate 1427.

Homotrimer; further assembles as hexamers of trimers. Interacts with gp41 (via C-terminus). Interacts with host CALM1; this interaction induces a conformational change in the Matrix protein, triggering exposure of the myristate group. Interacts with host AP3D1; this interaction allows the polyprotein trafficking to multivesicular bodies during virus assembly. Part of the pre-integration complex (PIC) which is composed of viral genome, matrix protein, Vpr and integrase. As to quaternary structure, homodimer; the homodimer further multimerizes as homohexamers or homopentamers. Interacts with human PPIA/CYPA; This interaction stabilizes the capsid. Interacts with human NUP153. Interacts with host PDZD8; this interaction stabilizes the capsid. Interacts with monkey TRIM5; this interaction destabilizes the capsid. In terms of assembly, homodimer, whose active site consists of two apposed aspartic acid residues. Heterodimer of p66 RT and p51 RT (RT p66/p51). Heterodimerization of RT is essential for DNA polymerase activity. The overall folding of the subdomains is similar in p66 RT and p51 RT but the spatial arrangements of the subdomains are dramatically different. As to quaternary structure, homotetramer; may further associate as a homohexadecamer. Part of the pre-integration complex (PIC) which is composed of viral genome, matrix protein, Vpr and integrase. Interacts with human SMARCB1/INI1 and human PSIP1/LEDGF isoform 1. Interacts with human KPNA3; this interaction might play a role in nuclear import of the pre-integration complex. Interacts with human NUP153; this interaction might play a role in nuclear import of the pre-integration complex. Requires Mg(2+) as cofactor. In terms of processing, specific enzymatic cleavages by the viral protease yield mature proteins. The protease is released by autocatalytic cleavage. The polyprotein is cleaved during and after budding, this process is termed maturation. Proteolytic cleavage of p66 RT removes the RNase H domain to yield the p51 RT subunit. Nucleocapsid protein p7 might be further cleaved after virus entry. Tyrosine phosphorylated presumably in the virion by a host kinase. Phosphorylation is apparently not a major regulator of membrane association. Post-translationally, phosphorylated possibly by host MAPK1; this phosphorylation is necessary for Pin1-mediated virion uncoating. In terms of processing, methylated by host PRMT6, impairing its function by reducing RNA annealing and the initiation of reverse transcription.

The protein localises to the host cell membrane. The protein resides in the host endosome. Its subcellular location is the host multivesicular body. It is found in the virion membrane. It localises to the host nucleus. The protein localises to the host cytoplasm. The protein resides in the virion. The catalysed reaction is Specific for a P1 residue that is hydrophobic, and P1' variable, but often Pro.. The enzyme catalyses Endohydrolysis of RNA in RNA/DNA hybrids. Three different cleavage modes: 1. sequence-specific internal cleavage of RNA. Human immunodeficiency virus type 1 and Moloney murine leukemia virus enzymes prefer to cleave the RNA strand one nucleotide away from the RNA-DNA junction. 2. RNA 5'-end directed cleavage 13-19 nucleotides from the RNA end. 3. DNA 3'-end directed cleavage 15-20 nucleotides away from the primer terminus.. It catalyses the reaction 3'-end directed exonucleolytic cleavage of viral RNA-DNA hybrid.. It carries out the reaction DNA(n) + a 2'-deoxyribonucleoside 5'-triphosphate = DNA(n+1) + diphosphate. With respect to regulation, protease: The viral protease is inhibited by many synthetic protease inhibitors (PIs), such as amprenavir, atazanavir, indinavir, loprinavir, nelfinavir, ritonavir and saquinavir. Use of protease inhibitors in tritherapy regimens permit more ambitious therapeutic strategies. Reverse transcriptase/ribonuclease H: RT can be inhibited either by nucleoside RT inhibitors (NRTIs) or by non nucleoside RT inhibitors (NNRTIs). NRTIs act as chain terminators, whereas NNRTIs inhibit DNA polymerization by binding a small hydrophobic pocket near the RT active site and inducing an allosteric change in this region. Classical NRTIs are abacavir, adefovir (PMEA), didanosine (ddI), lamivudine (3TC), stavudine (d4T), tenofovir (PMPA), zalcitabine (ddC), and zidovudine (AZT). Classical NNRTIs are atevirdine (BHAP U-87201E), delavirdine, efavirenz (DMP-266), emivirine (I-EBU), and nevirapine (BI-RG-587). The tritherapies used as a basic effective treatment of AIDS associate two NRTIs and one NNRTI. In terms of biological role, mediates, with Gag polyprotein, the essential events in virion assembly, including binding the plasma membrane, making the protein-protein interactions necessary to create spherical particles, recruiting the viral Env proteins, and packaging the genomic RNA via direct interactions with the RNA packaging sequence (Psi). Gag-Pol polyprotein may regulate its own translation, by the binding genomic RNA in the 5'-UTR. At low concentration, the polyprotein would promote translation, whereas at high concentration, the polyprotein would encapsidate genomic RNA and then shut off translation. Targets the polyprotein to the plasma membrane via a multipartite membrane-binding signal, that includes its myristoylated N-terminus. Matrix protein is part of the pre-integration complex. Implicated in the release from host cell mediated by Vpu. Binds to RNA. Its function is as follows. Forms the conical core that encapsulates the genomic RNA-nucleocapsid complex in the virion. Most core are conical, with only 7% tubular. The core is constituted by capsid protein hexamer subunits. The core is disassembled soon after virion entry. Host restriction factors such as TRIM5-alpha or TRIMCyp bind retroviral capsids and cause premature capsid disassembly, leading to blocks in reverse transcription. Capsid restriction by TRIM5 is one of the factors which restricts HIV-1 to the human species. Host PIN1 apparently facilitates the virion uncoating. On the other hand, interactions with PDZD8 or CYPA stabilize the capsid. Functionally, encapsulates and protects viral dimeric unspliced genomic RNA (gRNA). Binds these RNAs through its zinc fingers. Acts as a nucleic acid chaperone which is involved in rearangement of nucleic acid secondary structure during gRNA retrotranscription. Also facilitates template switch leading to recombination. As part of the polyprotein, participates in gRNA dimerization, packaging, tRNA incorporation and virion assembly. In terms of biological role, aspartyl protease that mediates proteolytic cleavages of Gag and Gag-Pol polyproteins during or shortly after the release of the virion from the plasma membrane. Cleavages take place as an ordered, step-wise cascade to yield mature proteins. This process is called maturation. Displays maximal activity during the budding process just prior to particle release from the cell. Also cleaves Nef and Vif, probably concomitantly with viral structural proteins on maturation of virus particles. Hydrolyzes host EIF4GI and PABP1 in order to shut off the capped cellular mRNA translation. The resulting inhibition of cellular protein synthesis serves to ensure maximal viral gene expression and to evade host immune response. Also mediates cleavage of host YTHDF3. Mediates cleavage of host CARD8, thereby activating the CARD8 inflammasome, leading to the clearance of latent HIV-1 in patient CD4(+) T-cells after viral reactivation; in contrast, HIV-1 can evade CARD8-sensing when its protease remains inactive in infected cells prior to viral budding. Multifunctional enzyme that converts the viral RNA genome into dsDNA in the cytoplasm, shortly after virus entry into the cell. This enzyme displays a DNA polymerase activity that can copy either DNA or RNA templates, and a ribonuclease H (RNase H) activity that cleaves the RNA strand of RNA-DNA heteroduplexes in a partially processive 3' to 5' endonucleasic mode. Conversion of viral genomic RNA into dsDNA requires many steps. A tRNA(3)-Lys binds to the primer-binding site (PBS) situated at the 5'-end of the viral RNA. RT uses the 3' end of the tRNA primer to perform a short round of RNA-dependent minus-strand DNA synthesis. The reading proceeds through the U5 region and ends after the repeated (R) region which is present at both ends of viral RNA. The portion of the RNA-DNA heteroduplex is digested by the RNase H, resulting in a ssDNA product attached to the tRNA primer. This ssDNA/tRNA hybridizes with the identical R region situated at the 3' end of viral RNA. This template exchange, known as minus-strand DNA strong stop transfer, can be either intra- or intermolecular. RT uses the 3' end of this newly synthesized short ssDNA to perform the RNA-dependent minus-strand DNA synthesis of the whole template. RNase H digests the RNA template except for two polypurine tracts (PPTs) situated at the 5'-end and near the center of the genome. It is not clear if both polymerase and RNase H activities are simultaneous. RNase H probably can proceed both in a polymerase-dependent (RNA cut into small fragments by the same RT performing DNA synthesis) and a polymerase-independent mode (cleavage of remaining RNA fragments by free RTs). Secondly, RT performs DNA-directed plus-strand DNA synthesis using the PPTs that have not been removed by RNase H as primers. PPTs and tRNA primers are then removed by RNase H. The 3' and 5' ssDNA PBS regions hybridize to form a circular dsDNA intermediate. Strand displacement synthesis by RT to the PBS and PPT ends produces a blunt ended, linear dsDNA copy of the viral genome that includes long terminal repeats (LTRs) at both ends. Its function is as follows. Catalyzes viral DNA integration into the host chromosome, by performing a series of DNA cutting and joining reactions. This enzyme activity takes place after virion entry into a cell and reverse transcription of the RNA genome in dsDNA. The first step in the integration process is 3' processing. This step requires a complex comprising the viral genome, matrix protein, Vpr and integrase. This complex is called the pre-integration complex (PIC). The integrase protein removes 2 nucleotides from each 3' end of the viral DNA, leaving recessed CA OH's at the 3' ends. In the second step, the PIC enters cell nucleus. This process is mediated through integrase and Vpr proteins, and allows the virus to infect a non dividing cell. This ability to enter the nucleus is specific of lentiviruses, other retroviruses cannot and rely on cell division to access cell chromosomes. In the third step, termed strand transfer, the integrase protein joins the previously processed 3' ends to the 5' ends of strands of target cellular DNA at the site of integration. The 5'-ends are produced by integrase-catalyzed staggered cuts, 5 bp apart. A Y-shaped, gapped, recombination intermediate results, with the 5'-ends of the viral DNA strands and the 3' ends of target DNA strands remaining unjoined, flanking a gap of 5 bp. The last step is viral DNA integration into host chromosome. This involves host DNA repair synthesis in which the 5 bp gaps between the unjoined strands are filled in and then ligated. Since this process occurs at both cuts flanking the HIV genome, a 5 bp duplication of host DNA is produced at the ends of HIV-1 integration. Alternatively, Integrase may catalyze the excision of viral DNA just after strand transfer, this is termed disintegration. This is Gag-Pol polyprotein (gag-pol) from Human immunodeficiency virus type 1 group N (isolate YBF106) (HIV-1).